The primary structure comprises 76 residues: Small proline-rich protein 4 (76 aa).

The tract at residues 38–76 (PKTKDPCVPQAKKQCPARSTTNPAQEKCPAQQDPKCKQK) is disordered.

It belongs to the cornifin (SPRR) family. In terms of processing, cross-linked to membrane proteins by transglutaminase.

Its subcellular location is the cytoplasm. The protein resides in the cell cortex. In terms of biological role, cross-linked envelope protein of keratinocytes. Involved in UV-induced cornification. The protein is Small proline-rich protein 4 (Sprr4) of Mus musculus (Mouse).